Reading from the N-terminus, the 489-residue chain is Cytochrome P450 2C70 (489 aa).

A signal peptide spans 1 to 27 (MALFIFLGIWLSCLVFLFLWNQHHVRR). Residue Cys-434 coordinates heme.

This sequence belongs to the cytochrome P450 family. Requires heme as cofactor.

The protein resides in the endoplasmic reticulum membrane. Its subcellular location is the microsome membrane. The enzyme catalyses chenodeoxycholate + reduced [NADPH--hemoprotein reductase] + O2 = alpha-muricholate + oxidized [NADPH--hemoprotein reductase] + H2O + H(+). The catalysed reaction is ursodeoxycholate + reduced [NADPH--hemoprotein reductase] + O2 = beta-muricholate + oxidized [NADPH--hemoprotein reductase] + H2O + H(+). Functionally, a cytochrome P450 monooxygenase involved in muricholic acid (MCA) synthesis. Hydroxylates at the 6-beta position two major bile acids, chenodeoxycholic acid (CDCA) and ursodeoxycholic acid (UDCA) to form alpha-MCA and beta-MCA, respectively. May regulate NR1H4/farnesoid X receptor signaling, as taurine-conjugated MCAs are antagonists of NR1H4. Mechanistically, uses molecular oxygen inserting one oxygen atom into a substrate, and reducing the second into a water molecule, with two electrons provided by NADPH via cytochrome P450 reductase (CPR; NADPH-ferrihemoprotein reductase). The protein is Cytochrome P450 2C70 of Rattus norvegicus (Rat).